Here is a 245-residue protein sequence, read N- to C-terminus: Superoxide dismutase [Mn], mitochondrial (245 aa).

Residues 1-32 (MVNLGSIWQNLLASQAPLQSMTGNATTMAGLA) constitute a mitochondrion transit peptide. The Mn(2+) site is built by histidine 58, histidine 106, aspartate 196, and histidine 200.

Belongs to the iron/manganese superoxide dismutase family. As to quaternary structure, homotetramer. The cofactor is Mn(2+).

The protein localises to the mitochondrion matrix. It catalyses the reaction 2 superoxide + 2 H(+) = H2O2 + O2. Its function is as follows. Destroys superoxide anion radicals which are normally produced within the cells and which are toxic to biological systems. The chain is Superoxide dismutase [Mn], mitochondrial (sod-2) from Neurospora crassa (strain ATCC 24698 / 74-OR23-1A / CBS 708.71 / DSM 1257 / FGSC 987).